The following is a 213-amino-acid chain: Octanoyltransferase (213 aa).

One can recognise a BPL/LPL catalytic domain in the interval 27–209 (AATPDEVWLC…RLLAAMPEPA (183 aa)). Residues 66-73 (RGGQVTYH), 140-142 (ALG), and 153-155 (GVA) contribute to the substrate site. Cys171 (acyl-thioester intermediate) is an active-site residue.

It belongs to the LipB family.

It is found in the cytoplasm. It catalyses the reaction octanoyl-[ACP] + L-lysyl-[protein] = N(6)-octanoyl-L-lysyl-[protein] + holo-[ACP] + H(+). It participates in protein modification; protein lipoylation via endogenous pathway; protein N(6)-(lipoyl)lysine from octanoyl-[acyl-carrier-protein]: step 1/2. Its function is as follows. Catalyzes the transfer of endogenously produced octanoic acid from octanoyl-acyl-carrier-protein onto the lipoyl domains of lipoate-dependent enzymes. Lipoyl-ACP can also act as a substrate although octanoyl-ACP is likely to be the physiological substrate. This is Octanoyltransferase from Bordetella petrii (strain ATCC BAA-461 / DSM 12804 / CCUG 43448).